The following is a 499-amino-acid chain: Probable dipeptidase B (499 aa).

Cys26 is an active-site residue.

The protein belongs to the peptidase C69 family.

The enzyme catalyses an L-aminoacyl-L-amino acid + H2O = 2 an L-alpha-amino acid. The sequence is that of Probable dipeptidase B (pepDB) from Streptococcus pyogenes serotype M18 (strain MGAS8232).